The sequence spans 69 residues: Disintegrin EMF10A (69 aa).

Residues 1-66 (MNSANPCCDP…DCPRNPWKSE (66 aa)) enclose the Disintegrin domain. Intrachain disulfides connect Cys-7-Cys-30, Cys-21-Cys-27, Cys-26-Cys-51, and Cys-39-Cys-58. The short motif at 43 to 45 (RGD) is the Cell attachment site element.

The protein belongs to the disintegrin family. Dimeric disintegrin subfamily. Heterodimer with EMF10B; disulfide-linked. Expressed by the venom gland.

It localises to the secreted. Its function is as follows. Extremely potent and selective inhibitor of integrin alpha-5/beta-1 (ITGA5/ITGB1). Partially inhibits adhesion of cells expressing alpha-IIb/beta-3 (ITGA2B/ITGB3), alpha-V/beta-3 (ITGAV/ITGB3), and alpha-4/beta-1 (ITGA4/ITGB1) to appropriate ligands only at concentration higher than 500 nM. Weakly inhibits ADP-induced platelet aggregation. This chain is Disintegrin EMF10A, found in Eristicophis macmahoni (Leaf-nosed viper).